The sequence spans 593 residues: Mitochondrial sodium/calcium exchanger protein (593 aa).

Positions 1–20 are cleaved as a signal peptide; the sequence is MGPLWALRVAGALSVAGVLA. Topologically, residues 21–93 are extracellular; the sequence is GHDGSQRAGQ…GAFCTFPSSL (73 aa). The N-linked (GlcNAc...) asparagine glycan is linked to Asn58. A helical transmembrane segment spans residues 94-114; it reads LPLSVSLYALWLLYLFVILGV. The Cytoplasmic segment spans residues 115 to 135; the sequence is TAEKFFCPNLSAISTNLKLSH. The chain crosses the membrane as a helical span at residues 136-158; the sequence is NGLGVVGHSLTPALHGVTFLAFG. Residues 159 to 178 lie on the Extracellular side of the membrane; it reads NGAPDIFSAVVAFSDPRTAG. A helical transmembrane segment spans residues 179 to 199; that stretch reads LAVGAIFGAGIFVTTVVAGGI. Topologically, residues 200-215 are cytoplasmic; the sequence is ALVKPFAAASRPFLRD. Residues 216–236 traverse the membrane as a helical segment; that stretch reads VIFYMVAVFLTFLVLYFGYIT. The Extracellular portion of the chain corresponds to 237-239; the sequence is LGE. A helical transmembrane segment spans residues 240–260; sequence ALGYLGLYVFYVFTVVLCTWI. Over 261–334 the chain is Cytoplasmic; sequence HRWQRGDGPP…KWRRKPWYWR (74 aa). The span at 268-277 shows a compositional bias: pro residues; sequence GPPPPGPWEP. The segment at 268–291 is disordered; sequence GPPPPGPWEPAIPTDAEEQESSGT. The helical transmembrane segment at 335-355 threads the bilayer; sequence LFKVLKVPVELVLLLTVPVVD. Residues 356–369 lie on the Extracellular side of the membrane; that stretch reads PDKDDLNWKRPLNC. Residues 370–390 traverse the membrane as a helical segment; that stretch reads LHIVTGPLLCIFTLKSGAYGL. The Cytoplasmic portion of the chain corresponds to 391–395; sequence YQIQG. The helical transmembrane segment at 396–416 threads the bilayer; sequence VFPVWALVALAGSVLAIIVFV. Over 417-428 the chain is Extracellular; sequence TTHNEEPPKYHC. A helical transmembrane segment spans residues 429–449; the sequence is VFAFLGFLSSAMWINAAATEL. Residues 450–454 are Cytoplasmic-facing; it reads VNILR. Residues 455–475 traverse the membrane as a helical segment; it reads TLGIIFELSNTVLGLTLLAWG. The Extracellular portion of the chain corresponds to 476–496; sequence NSIGDTFSDLTMARQGYPRMA. A helical membrane pass occupies residues 497–517; the sequence is FSACFGGIIFNILVGVGLGCL. The Cytoplasmic segment spans residues 518-533; sequence LQMTNSQMVVKLEPDS. A helical transmembrane segment spans residues 534–554; the sequence is LLVWILAGALGLSLVFSFVAV. Topologically, residues 555-564 are extracellular; the sequence is PAQCFQLGKA. Residues 565–585 traverse the membrane as a helical segment; that stretch reads YGTCLILYYLVFLCVALLTEF. Residues 586–593 are Cytoplasmic-facing; it reads RVIHLAAT.

This sequence belongs to the Ca(2+):cation antiporter (CaCA) (TC 2.A.19) family. SLC24A subfamily.

Its subcellular location is the mitochondrion inner membrane. The catalysed reaction is Ca(2+)(in) + 3 Na(+)(out) = Ca(2+)(out) + 3 Na(+)(in). In terms of biological role, mitochondrial sodium/calcium antiporter that mediates sodium-dependent calcium efflux from mitochondrion, by mediating the exchange of 3 sodium ions per 1 calcium ion. Plays a central role in mitochondrial calcium homeostasis by mediating mitochondrial calcium extrusion: calcium efflux is essential for mitochondrial function and cell survival, notably in cardiomyocytes. Involved in B-lymphocyte chemotaxis. This Gallus gallus (Chicken) protein is Mitochondrial sodium/calcium exchanger protein.